The sequence spans 398 residues: uncharacterized protein (398 aa).

It belongs to the class-V pyridoxal-phosphate-dependent aminotransferase family. As to quaternary structure, homodimer.

Functionally, is essential for optimal growth. This is an uncharacterized protein from Mycobacterium tuberculosis (strain CDC 1551 / Oshkosh).